Reading from the N-terminus, the 798-residue chain is uncharacterized protein (798 aa).

The N-terminal stretch at 1-22 (MKFKYGAIVFSGLLGVSAILAA) is a signal peptide. Residue Cys-23 is the site of N-palmitoyl cysteine attachment. The S-diacylglycerol cysteine moiety is linked to residue Cys-23. Over residues 178-192 (SKGAQKDNKSAEVQR) the composition is skewed to basic and acidic residues. 4 disordered regions span residues 178–204 (SKGA…TQPL), 226–260 (NGKK…ATSD), 443–463 (EVNA…QSDQ), and 478–515 (SDIK…TPKK). Positions 193 to 204 (KSTGQKTVTQPL) are enriched in polar residues. Positions 226–235 (NGKKKEEKKS) are enriched in basic and acidic residues. The segment covering 478–495 (SDIKVKPKTQAESKKSSD) has biased composition (basic and acidic residues). Over residues 496–515 (SKQTANTGKGSNSKQQTPKK) the composition is skewed to polar residues.

Belongs to the MG185/MG260 family.

Its subcellular location is the cell membrane. This is an uncharacterized protein from Mycoplasma pneumoniae (strain ATCC 29342 / M129 / Subtype 1) (Mycoplasmoides pneumoniae).